A 382-amino-acid chain; its full sequence is Cytochrome b (382 aa).

Helical transmembrane passes span 28–48 (YGFLLGIIFFIQILTGVFLAS), 72–94 (WCFRYMHATGASLVFLLTYLHIL), 107–127 (SWISGLIIFALFIVTAFIGYV), and 169–189 (FFVLHFILPFVALCIVFIHIF). His78 and His92 together coordinate heme b. Heme b-binding residues include His173 and His187. Position 192 (His192) interacts with a ubiquinone. Helical transmembrane passes span 214–234 (LLSLDVKGFNNIFILFLLQSI), 274–294 (IPSKTAGLLIVLASLQLLFLL), 317–337 (VPMIWFMCSFYALLWIGCQLP), and 340–360 (IFILYGRLFIISFFSSGLFAL).

It belongs to the cytochrome b family. In terms of assembly, the main subunits of complex b-c1 are: cytochrome b, cytochrome c1 and the Rieske protein. Heme b serves as cofactor.

The protein localises to the mitochondrion inner membrane. In terms of biological role, component of the ubiquinol-cytochrome c reductase complex (complex III or cytochrome b-c1 complex) that is part of the mitochondrial respiratory chain. The b-c1 complex mediates electron transfer from ubiquinol to cytochrome c. Contributes to the generation of a proton gradient across the mitochondrial membrane that is then used for ATP synthesis. In Plasmodium vivax (strain Salvador I), this protein is Cytochrome b (MT-CYB).